We begin with the raw amino-acid sequence, 450 residues long: 3-phosphoshikimate 1-carboxyvinyltransferase (450 aa).

Residues lysine 28, serine 29, and arginine 33 each coordinate 3-phosphoshikimate. Residue lysine 28 coordinates phosphoenolpyruvate. Phosphoenolpyruvate is bound by residues glycine 100 and arginine 128. The 3-phosphoshikimate site is built by serine 173, glutamine 175, aspartate 326, and lysine 353. Phosphoenolpyruvate is bound at residue glutamine 175. Aspartate 326 (proton acceptor) is an active-site residue. Phosphoenolpyruvate-binding residues include arginine 357 and arginine 402.

Belongs to the EPSP synthase family. Monomer.

The protein resides in the cytoplasm. It catalyses the reaction 3-phosphoshikimate + phosphoenolpyruvate = 5-O-(1-carboxyvinyl)-3-phosphoshikimate + phosphate. The protein operates within metabolic intermediate biosynthesis; chorismate biosynthesis; chorismate from D-erythrose 4-phosphate and phosphoenolpyruvate: step 6/7. Its function is as follows. Catalyzes the transfer of the enolpyruvyl moiety of phosphoenolpyruvate (PEP) to the 5-hydroxyl of shikimate-3-phosphate (S3P) to produce enolpyruvyl shikimate-3-phosphate and inorganic phosphate. The polypeptide is 3-phosphoshikimate 1-carboxyvinyltransferase (Brucella melitensis biotype 2 (strain ATCC 23457)).